A 97-amino-acid polypeptide reads, in one-letter code: Plasmid stability protein StbC (97 aa).

Functionally, involved in plasmid stability. The protein is Plasmid stability protein StbC (stbC) of Pseudomonas syringae pv. tomato (strain ATCC BAA-871 / DC3000).